Consider the following 2090-residue polypeptide: Nuclear pore complex protein Nup205 (2090 aa).

This sequence belongs to the NUP186/NUP192/NUP205 family. Part of the nuclear pore complex (NPC).

The protein localises to the nucleus. The protein resides in the nuclear pore complex. Plays a role in the nuclear pore complex (NPC) assembly and maintenance, but with limited role in NPC permeability. Required for specific nuclear import pathways such as Mad import. This chain is Nuclear pore complex protein Nup205, found in Drosophila melanogaster (Fruit fly).